Reading from the N-terminus, the 89-residue chain is Sugar transporter SemiSWEET (89 aa).

Transmembrane regions (helical) follow at residues Ile-4–Ile-27, Ile-35–Ile-55, and Phe-60–Ile-82. The 53-residue stretch at Thr-7–Asp-59 folds into the PQ-loop domain.

As to quaternary structure, homodimer.

The protein resides in the cell membrane. Its function is as follows. The homodimer mediates transmembrane sugar transport down a concentration gradient. Transport is probably effected by rocking-type movements, where a cargo-binding cavity opens first on one and then on the other side of the membrane. This is Sugar transporter SemiSWEET from Escherichia coli (strain UMEA 3162-1).